Reading from the N-terminus, the 130-residue chain is MIQQETLLQVADNSGIKKVMCIKVLGGSKKRYASVGDEIIVAVKDAQPAFGLKDSTGKKVHNKAVQRAVVVRTTKEIRRPDGSYIRFDDNACAIIDDKGNPKGTRIFGPVARELRDKKYAKIISLAPEVL.

The protein belongs to the universal ribosomal protein uL14 family. As to quaternary structure, part of the 50S ribosomal subunit. Forms a cluster with proteins L3 and L19. In the 70S ribosome, L14 and L19 interact and together make contacts with the 16S rRNA in bridges B5 and B8.

Functionally, binds to 23S rRNA. Forms part of two intersubunit bridges in the 70S ribosome. This Leptospira interrogans serogroup Icterohaemorrhagiae serovar copenhageni (strain Fiocruz L1-130) protein is Large ribosomal subunit protein uL14.